A 253-amino-acid chain; its full sequence is 5-oxoprolinase subunit A (253 aa).

The protein belongs to the LamB/PxpA family. Forms a complex composed of PxpA, PxpB and PxpC.

The catalysed reaction is 5-oxo-L-proline + ATP + 2 H2O = L-glutamate + ADP + phosphate + H(+). Catalyzes the cleavage of 5-oxoproline to form L-glutamate coupled to the hydrolysis of ATP to ADP and inorganic phosphate. The chain is 5-oxoprolinase subunit A from Bacillus thuringiensis subsp. konkukian (strain 97-27).